A 355-amino-acid chain; its full sequence is Olfactory receptor 1I1 (355 aa).

The Extracellular segment spans residues 1 to 25 (MEPEKQTEISEFFLQGLSEKPEHQT). A helical transmembrane segment spans residues 26-49 (LLFTMFLSTYLVTIIGNALIILAI). Residues 50 to 57 (ITDSHLHT) are Cytoplasmic-facing. The chain crosses the membrane as a helical span at residues 58–79 (PMYFFLFNLSLVDTLLSSTTVP). Residues 80–100 (KMLANIQAQSRAIPFVGCLTQ) lie on the Extracellular side of the membrane. The helical transmembrane segment at 101 to 120 (MYAFHLFGTMDSFLLAVMAI) threads the bilayer. The Cytoplasmic segment spans residues 121 to 139 (DRFVAIVHPQRYLVLMCSP). Residues 140 to 158 (VCGLLLGASWMITNLQSLI) form a helical membrane-spanning segment. At 159-195 (HTCLMAQLTFCAGSEISHFFCDLMPLLKLSGSDTHTN) the chain is on the extracellular side. Residues 196 to 219 (ELVIFAFGIVVGTSPFSCILLSYI) traverse the membrane as a helical segment. Over 220–236 (RIFWTVFKIPSTRGKWK) the chain is Cytoplasmic. Residues 237-259 (AFSTCGLHLTVVSLSYGTIFAVY) traverse the membrane as a helical segment. Residues 260 to 272 (LQPTSPSSSQKDK) are Extracellular-facing. Residues 273–292 (AAALMCGVFIPMLNPFIYSI) traverse the membrane as a helical segment. The Cytoplasmic portion of the chain corresponds to 293–355 (RNKDMKAALG…QSLAGNRDME (63 aa)).

This sequence belongs to the G-protein coupled receptor 1 family.

It is found in the cell membrane. Its function is as follows. Odorant receptor. This Homo sapiens (Human) protein is Olfactory receptor 1I1 (OR1I1).